We begin with the raw amino-acid sequence, 281 residues long: ATP phosphoribosyltransferase (281 aa).

Belongs to the ATP phosphoribosyltransferase family. Long subfamily. The cofactor is Mg(2+).

The protein resides in the cytoplasm. It catalyses the reaction 1-(5-phospho-beta-D-ribosyl)-ATP + diphosphate = 5-phospho-alpha-D-ribose 1-diphosphate + ATP. It participates in amino-acid biosynthesis; L-histidine biosynthesis; L-histidine from 5-phospho-alpha-D-ribose 1-diphosphate: step 1/9. With respect to regulation, feedback inhibited by histidine. Its function is as follows. Catalyzes the condensation of ATP and 5-phosphoribose 1-diphosphate to form N'-(5'-phosphoribosyl)-ATP (PR-ATP). Has a crucial role in the pathway because the rate of histidine biosynthesis seems to be controlled primarily by regulation of HisG enzymatic activity. The chain is ATP phosphoribosyltransferase (hisG) from Archaeoglobus fulgidus (strain ATCC 49558 / DSM 4304 / JCM 9628 / NBRC 100126 / VC-16).